The primary structure comprises 721 residues: MESLHARLFPGLSINIQRSNGLIHPANISTVNVEKSCVSVEWIEGGTTKGKEIDIDDVAAINPELLQLLPLRPKDSLPLQENVTVPKQKRKSVNSKIPALKEGLRSRSTRMSTVSEVRIPAQENEMEVELPVPTNSRKQFAIPSHPRASCSTVTELPLLMVSEEAEEQAHSTRSTSSANPGNSVRRKSCIVKEMEKMKNKREEKRAQNSELRIKRAQEYDSSFPNWEFARMIKEFRVTMECSPLTVTDPIEEHRICVCVRKRPLNKQELAKKEIDVISVPSKCLLLVHEPKLKVDLTKYLENQAFCFDFAFDETASNEVVYRFTARPLVQTIFEGGKATCFAYGQTGSGKTHTMGGDLSGKSQNASKGIYAMASRDVFLLKNQPRYRNLNLEVYVTFFEIYNGKVFDLLNKKAKLRVLEDSRQQVQVVGLQEYLVTCADDVIKMINMGSACRTSGQTFANSNSSRSHACFQILLRTKGRLHGKFSLVDLAGNERGADTSSADRQTRMEGAEINKSLLALKECIRALGQNKAHTPFRESKLTQVLRDSFIGENSRTCMIAMISPGISSCEYTLNTLRYADRVKELSPHSGPSGEQPVQMETEVMEASSNGTSLTGNEEEELSSQMSSFNEAMTQIRELEERALEELREIIQQGPNWLELSEMTDQPDYDLETFVNKAESALTQQAKQAKHFSALREVIKALRLAMQLEEQASKQINSKKRHQ.

Residues 1-250 (MESLHARLFP…CSPLTVTDPI (250 aa)) form a globular region. 2 positions are modified to phosphoserine: Ser3 and Ser19. A Phosphoserine; by AURKB modification is found at Ser92. The Microtubule tip localization signal signature appears at 95–98 (SKIP). Phosphoserine occurs at positions 106, 108, 112, 162, 171, 183, and 188. Positions 164–188 (EAEEQAHSTRSTSSANPGNSVRRKS) are disordered. Positions 171 to 182 (STRSTSSANPGN) are enriched in polar residues. Positions 203–234 (EKRAQNSELRIKRAQEYDSSFPNWEFARMIKE) are negative regulator of microtubule-binding. In terms of domain architecture, Kinesin motor spans 254-584 (RICVCVRKRP…LRYADRVKEL (331 aa)). ATP-binding positions include Arg260 and 344-351 (GQTGSGKT). Phosphoserine occurs at positions 515 and 626. Residues 614-652 (GNEEEELSSQMSSFNEAMTQIRELEERALEELREIIQQG) adopt a coiled-coil conformation.

The protein belongs to the TRAFAC class myosin-kinesin ATPase superfamily. Kinesin family. MCAK/KIF2 subfamily. Interacts with CENPH. Interacts with MTUS2/TIP150; the interaction is direct. Interacts with MAPRE1; the interaction is direct, regulated by phosphorylation and is probably required for targeting to growing microtubule plus ends. Interacts with KIF18B at microtubule tips; this interaction increases the affinity of both partners for microtubule plus ends and is required for robust microtubule depolymerization. Phosphorylation by AURKA or AURKB strongly reduces KIF18B-binding. Phosphorylation by AURKB, regulates association with centromeres and kinetochores and the microtubule depolymerization activity. Post-translationally, ubiquitinated.

It is found in the cytoplasm. The protein localises to the cytoskeleton. It localises to the nucleus. Its subcellular location is the chromosome. The protein resides in the centromere. It is found in the kinetochore. In terms of biological role, in complex with KIF18B, constitutes the major microtubule plus-end depolymerizing activity in mitotic cells. Regulates the turnover of microtubules at the kinetochore and functions in chromosome segregation during mitosis. Plays a role in chromosome congression and is required for the lateral to end-on conversion of the chromosome-microtubule attachment. In Mus musculus (Mouse), this protein is Kinesin-like protein KIF2C (Kif2c).